The following is a 345-amino-acid chain: Transcription factor 19 (345 aa).

Positions 31-88 constitute an FHA domain; sequence YRLGHRADLCDVALRPQQEPGLISGIHAELHAEPRGDDWRVSLEDHSLQGTLVNNVRL. Disordered stretches follow at residues 138–167 and 190–277; these read RSRG…STLS and LTFS…KYPV. The segment at 293–342 adopts a PHD-type zinc-finger fold; sequence AAPCCCLPQEETVAWVQCDGCDVWFHVACVGCSIQAAREADFRCPGCRAG. Positions 296, 298, 310, 313, 318, 321, 336, and 339 each coordinate Zn(2+).

It localises to the nucleus. Potential transcription factor that may play a role in the regulation of genes involved in cell cycle G1/S transition. May bind to regulatory elements of genes, including the promoter of the transcription factor FOXO1. The sequence is that of Transcription factor 19 (TCF19) from Macaca mulatta (Rhesus macaque).